A 290-amino-acid chain; its full sequence is Fat storage-inducing transmembrane protein 1 (290 aa).

Transmembrane regions (helical) follow at residues 1–21 (MFLNSILVVITDLAAGLLGNT), 26–46 (HFHLLLSALLLFGPLLSLWVS), 65–85 (SGWGWTCIFVGSFVFVLSFSV), 173–193 (LLLCLCCLLLAEETAVFGPYL), and 205–225 (ILFLFCVLLLSLWVFLLLCLL).

It belongs to the FIT family. FIT1 subfamily.

Its subcellular location is the endoplasmic reticulum membrane. In terms of biological role, may play an important role in the formation of lipid droplets (LDs) which are storage organelles at the center of lipid and energy homeostasis. May directly bind to diacylglycerol (DAGs) and triacylglycerol. In Danio rerio (Zebrafish), this protein is Fat storage-inducing transmembrane protein 1 (fitm1l).